A 697-amino-acid polypeptide reads, in one-letter code: MSQLKSSAIMDARILWPAFGGAFRKLDPRTLARNPVMFVVAIVSALTSVLFLRDLITGGGDLRFTLQIIIWLWFTVLFANFAEAVAEGRGKAQADSLRKARTETQAKLLAGEDRSKFKLVPGTSLKVGDIVLVEAGDIIPSDGEVVEGVASVNEAAITGESAPVIRESGGDRSAVTGGTQVLSDWIRVRITAAAGHTFLDRMISLVEGAERQKTPNEIALNILLVGMTLIFVLATATIPSFASYSGGYISVTVLVALFVTLIPTTIGALLSAIGIAGMDRLVRFNVLAMSGRAVEAAGDVDTLLLDKTGTITLGNRQATDFRPVKGVTEQELADAAQLASLADETPEGRSIVVLAKEKYGIRARDMATLHATFVPFTAQTRMSGVDIDGSSVRKGAVDSVLAHVNQSTVASHATRPNSDTIRDLQAIADEVAKSGGTPLAVERDGRLLGVVHLKDIVKGGIRERFAELRKMGIRTVMITGDNPMTAAAIAAEAGVDDFLAQATPEDKLKLIRDEQAKGKLVAMCGDGTNDAPALAQADVGVAMNTGTVAAREAGNMVDLDSDPTKLIEIVEIGKALLMTRGSLTTFSIANDVAKYFAIIPAMFAVFYVAPGQSTGPLQALNIMHLATPQSAILSAIIFNALIIIALIPLSLRGVKYRAIGAGALLSRNLLVYGLGGIIVPFVGIKIIDMAVTALGLA.

A run of 4 helical transmembrane segments spans residues 36–56, 66–86, 218–238, and 253–273; these read VMFVVAIVSALTSVLFLRDLI, LQIIIWLWFTVLFANFAEAVA, IALNILLVGMTLIFVLATATI, and VLVALFVTLIPTTIGALLSAI. Asp306 functions as the 4-aspartylphosphate intermediate in the catalytic mechanism. ATP contacts are provided by residues Asp343, Glu347, 376–383, and Lys394; that span reads FTAQTRMS. 2 residues coordinate Mg(2+): Asp526 and Asp530. 3 consecutive transmembrane segments (helical) span residues 595 to 615, 631 to 651, and 669 to 689; these read YFAIIPAMFAVFYVAPGQSTG, AILSAIIFNALIIIALIPLSL, and LLVYGLGGIIVPFVGIKIIDM.

Belongs to the cation transport ATPase (P-type) (TC 3.A.3) family. Type IA subfamily. The system is composed of three essential subunits: KdpA, KdpB and KdpC.

The protein localises to the cell inner membrane. The catalysed reaction is K(+)(out) + ATP + H2O = K(+)(in) + ADP + phosphate + H(+). Functionally, part of the high-affinity ATP-driven potassium transport (or Kdp) system, which catalyzes the hydrolysis of ATP coupled with the electrogenic transport of potassium into the cytoplasm. This subunit is responsible for energy coupling to the transport system and for the release of the potassium ions to the cytoplasm. This chain is Potassium-transporting ATPase ATP-binding subunit, found in Mesorhizobium japonicum (strain LMG 29417 / CECT 9101 / MAFF 303099) (Mesorhizobium loti (strain MAFF 303099)).